The primary structure comprises 671 residues: Zinc finger and BTB domain-containing protein 16-A (671 aa).

Residues 34–96 (CDVVIMVDSQ…AYTATLQAKV (63 aa)) enclose the BTB domain. 2 disordered regions span residues 130–167 (ENDT…TEES) and 248–289 (VDES…RSSV). Basic and acidic residues predominate over residues 270-279 (RSGEPDKNRD). Thr283 is subject to Phosphothreonine. 9 consecutive C2H2-type zinc fingers follow at residues 401–423 (ERCN…RKLH), 429–451 (YGCE…LLSH), 458–480 (IVCD…RQIH), 487–509 (IFCL…MEVH), 515–537 (YICS…LRSH), 544–566 (FECE…KRIH), 572–594 (YECN…YRVH), 600–622 (FECK…LRTH), and 628–650 (YQCT…MKGH).

It belongs to the krueppel C2H2-type zinc-finger protein family. As to quaternary structure, interacts with btbd6a (via BTB domain). Post-translationally, polyubiquitinated, leading to its proteasomal degradation. In terms of tissue distribution, during early stages of primary neurogenesis, expressed in the neural epithelium, with highest levels in the forebrain and midbrain. Also expressed in a posterior-to-anterior gradient in the caudal neural plate at the 3-6 somite stage.

The protein resides in the nucleus. It is found in the cytoplasm. It participates in protein modification; protein ubiquitination. In terms of biological role, probable transcription factor. Probable substrate-recognition component of an E3 ubiquitin-protein ligase complex which mediates the ubiquitination and subsequent proteasomal degradation of target proteins. Inhibits neurogenesis. This is Zinc finger and BTB domain-containing protein 16-A from Danio rerio (Zebrafish).